Reading from the N-terminus, the 149-residue chain is Putative pre-16S rRNA nuclease (149 aa).

It belongs to the YqgF nuclease family.

The protein localises to the cytoplasm. In terms of biological role, could be a nuclease involved in processing of the 5'-end of pre-16S rRNA. In Burkholderia vietnamiensis (strain G4 / LMG 22486) (Burkholderia cepacia (strain R1808)), this protein is Putative pre-16S rRNA nuclease.